The sequence spans 195 residues: Molybdenum cofactor guanylyltransferase (195 aa).

GTP contacts are provided by residues 10–12, lysine 23, asparagine 51, aspartate 69, and aspartate 99; that span reads LAG. Aspartate 99 is a Mg(2+) binding site.

The protein belongs to the MobA family. In terms of assembly, monomer. It depends on Mg(2+) as a cofactor.

The protein localises to the cytoplasm. It carries out the reaction Mo-molybdopterin + GTP + H(+) = Mo-molybdopterin guanine dinucleotide + diphosphate. In terms of biological role, transfers a GMP moiety from GTP to Mo-molybdopterin (Mo-MPT) cofactor (Moco or molybdenum cofactor) to form Mo-molybdopterin guanine dinucleotide (Mo-MGD) cofactor. This Shewanella putrefaciens (strain CN-32 / ATCC BAA-453) protein is Molybdenum cofactor guanylyltransferase.